We begin with the raw amino-acid sequence, 126 residues long: KH homology domain-containing protein 1B (126 aa).

Positions 19–78 constitute a KH domain; it reads PLVFDMEEDQEDYIFGPDDEYLHTLEVHSNTLIQLERWFSPTGQTRVTVVGPLKARLWVM.

The protein belongs to the KHDC1 family.

This is KH homology domain-containing protein 1B (Khdc1b) from Mus musculus (Mouse).